A 1059-amino-acid polypeptide reads, in one-letter code: Putative ATP-dependent RNA helicase BoYb (1059 aa).

A Q motif motif is present at residues 54 to 82 (RRFAEVSLLPDILETMRNLGLNRLLRLQS). The region spanning 87-284 (HLAGGSGHGA…RAVNDKPALV (198 aa)) is the Helicase ATP-binding domain. 100–107 (GSPASGRT) contacts ATP. The DEAD box signature appears at 230–233 (DDVD). A Tudor domain is found at 575–639 (PPVAGAICMY…GKLFECPEAL (65 aa)). The tract at residues 756 to 787 (VQDSKEKANSKPHEKMKGKMTDQPAKLQSQPP) is disordered. The segment covering 757-775 (QDSKEKANSKPHEKMKGKM) has biased composition (basic and acidic residues).

It is found in the cytoplasm. It carries out the reaction ATP + H2O = ADP + phosphate + H(+). In terms of biological role, involved in primary piRNA biogenesis in germline cells. This is Putative ATP-dependent RNA helicase BoYb (BoYb) from Drosophila melanogaster (Fruit fly).